Here is a 379-residue protein sequence, read N- to C-terminus: tRNA-specific 2-thiouridylase MnmA (379 aa).

Residues 9–16 (AMSGGVDS) and Met35 contribute to the ATP site. An interaction with target base in tRNA region spans residues 94-96 (NPD). The active-site Nucleophile is the Cys99. A disulfide bridge links Cys99 with Cys195. Gly123 lines the ATP pocket. The segment at 145-147 (KDQ) is interaction with tRNA. Cys195 functions as the Cysteine persulfide intermediate in the catalytic mechanism. Positions 307-308 (RY) are interaction with tRNA.

Belongs to the MnmA/TRMU family.

The protein localises to the cytoplasm. The enzyme catalyses S-sulfanyl-L-cysteinyl-[protein] + uridine(34) in tRNA + AH2 + ATP = 2-thiouridine(34) in tRNA + L-cysteinyl-[protein] + A + AMP + diphosphate + H(+). Functionally, catalyzes the 2-thiolation of uridine at the wobble position (U34) of tRNA, leading to the formation of s(2)U34. In Xylella fastidiosa (strain 9a5c), this protein is tRNA-specific 2-thiouridylase MnmA.